Consider the following 181-residue polypeptide: Cell division protein ZapC (181 aa).

The protein belongs to the ZapC family. Interacts directly with FtsZ.

It is found in the cytoplasm. Functionally, contributes to the efficiency of the cell division process by stabilizing the polymeric form of the cell division protein FtsZ. Acts by promoting interactions between FtsZ protofilaments and suppressing the GTPase activity of FtsZ. This is Cell division protein ZapC from Shewanella woodyi (strain ATCC 51908 / MS32).